A 1217-amino-acid chain; its full sequence is DNA-directed RNA polymerase subunit beta' (1217 aa).

Residues Cys60, Cys62, Cys75, and Cys78 each contribute to the Zn(2+) site. Asp449, Asp451, and Asp453 together coordinate Mg(2+). Cys821, Cys895, Cys902, and Cys905 together coordinate Zn(2+).

It belongs to the RNA polymerase beta' chain family. The RNAP catalytic core consists of 2 alpha, 1 beta, 1 beta' and 1 omega subunit. When a sigma factor is associated with the core the holoenzyme is formed, which can initiate transcription. The cofactor is Mg(2+). Zn(2+) serves as cofactor.

It carries out the reaction RNA(n) + a ribonucleoside 5'-triphosphate = RNA(n+1) + diphosphate. DNA-dependent RNA polymerase catalyzes the transcription of DNA into RNA using the four ribonucleoside triphosphates as substrates. The protein is DNA-directed RNA polymerase subunit beta' of Lactobacillus acidophilus (strain ATCC 700396 / NCK56 / N2 / NCFM).